Consider the following 732-residue polypeptide: Polyribonucleotide nucleotidyltransferase (732 aa).

Mg(2+) is bound by residues D515 and D521. The KH domain occupies 581–641; it reads PKLELFNVDP…KNVDAAKDYI (61 aa). The S1 motif domain occupies 672–731; it reads GDEFTGSVKSVVDFGVFIELKDGVDGLLHISKIKSPLNVGDQVKVCVSEQKGNKISLSLV.

Belongs to the polyribonucleotide nucleotidyltransferase family. Requires Mg(2+) as cofactor.

It localises to the cytoplasm. The catalysed reaction is RNA(n+1) + phosphate = RNA(n) + a ribonucleoside 5'-diphosphate. Its function is as follows. Involved in mRNA degradation. Catalyzes the phosphorolysis of single-stranded polyribonucleotides processively in the 3'- to 5'-direction. The protein is Polyribonucleotide nucleotidyltransferase of Campylobacter concisus (strain 13826).